A 24-amino-acid polypeptide reads, in one-letter code: Defensin D6 (24 aa).

Belongs to the DEFL family. Group IV subfamily. Distributed in the epidermal cell layer of leaves and in the subepidermal layer region of stems. Not in roots.

The protein localises to the secreted. The protein resides in the cell wall. Functionally, antimicrobial peptide. Active against Fusarium spp., Gram-positive and Gram-negative bacterial pathogens. This is Defensin D6 from Spinacia oleracea (Spinach).